Here is a 154-residue protein sequence, read N- to C-terminus: MLKQITLYTDGSCLGNPGPGGYAAVLIYKQHRKELAQGYELTTNNRMELMAAIAGLQSLSEPCQVRLTTDSQYVRQGITQWIHGWKKKGWKTANREPVKNVDLWLLLDSEIQRHDVEWFWVKGHSGHPENERCDELARNAALADSRLIDSGYPS.

Positions Met1–Leu142 constitute an RNase H type-1 domain. The Mg(2+) site is built by Asp10, Glu48, Asp70, and Asp134.

Belongs to the RNase H family. As to quaternary structure, monomer. Mg(2+) is required as a cofactor.

Its subcellular location is the cytoplasm. The enzyme catalyses Endonucleolytic cleavage to 5'-phosphomonoester.. Functionally, endonuclease that specifically degrades the RNA of RNA-DNA hybrids. The chain is Ribonuclease H from Tolumonas auensis (strain DSM 9187 / NBRC 110442 / TA 4).